The chain runs to 203 residues: Monothiol glutaredoxin-7 (203 aa).

The first 32 residues, 1 to 32 (MAIVINKRNVRVLVITNLLLIVVFFVLRNSNA), serve as a signal peptide directing secretion. One can recognise a Glutaredoxin domain in the interval 88-191 (AAEYNKIMEQ…DSFKKWSDGA (104 aa)). Cys-108 contacts [2Fe-2S] cluster.

The protein belongs to the glutaredoxin family. Monothiol subfamily.

The polypeptide is Monothiol glutaredoxin-7 (GRX7) (Saccharomyces cerevisiae (strain ATCC 204508 / S288c) (Baker's yeast)).